The primary structure comprises 472 residues: Glutamine synthetase (472 aa).

Residues 13–101 (SKARFVDLRF…TCDVIDPADG (89 aa)) enclose the GS beta-grasp domain. One can recognise a GS catalytic domain in the interval 108 to 472 (PRSIARRAEA…PLEFEMYYSL (365 aa)). Mg(2+) contacts are provided by Glu133 and Glu135. Position 211 (Glu211) interacts with ATP. Positions 216 and 224 each coordinate Mg(2+). Residues 268–269 (NG) and Gly269 each bind L-glutamate. His273 lines the Mg(2+) pocket. ATP-binding positions include 275-277 (HQS) and Ser277. Residues Arg325, Glu331, and Arg343 each coordinate L-glutamate. ATP is bound by residues Arg343, Arg348, and Lys356. Glu361 serves as a coordination point for Mg(2+). An L-glutamate-binding site is contributed by Arg363. At Tyr401 the chain carries O-AMP-tyrosine.

Belongs to the glutamine synthetase family. In terms of assembly, oligomer of 12 subunits arranged in the form of two hexameric ring. It depends on Mg(2+) as a cofactor.

Its subcellular location is the cytoplasm. The catalysed reaction is L-glutamate + NH4(+) + ATP = L-glutamine + ADP + phosphate + H(+). With respect to regulation, the activity of this enzyme could be controlled by adenylation under conditions of abundant glutamine. Catalyzes the ATP-dependent biosynthesis of glutamine from glutamate and ammonia. In Neisseria gonorrhoeae, this protein is Glutamine synthetase.